The following is a 527-amino-acid chain: Peptide chain release factor 3 (527 aa).

The tr-type G domain occupies 11–278 (AKRRTFAIIS…GFVEWAPAPL (268 aa)). Residues 20-27 (SHPDAGKT), 87-91 (DTPGH), and 141-144 (NKMD) contribute to the GTP site.

The protein belongs to the TRAFAC class translation factor GTPase superfamily. Classic translation factor GTPase family. PrfC subfamily.

The protein localises to the cytoplasm. In terms of biological role, increases the formation of ribosomal termination complexes and stimulates activities of RF-1 and RF-2. It binds guanine nucleotides and has strong preference for UGA stop codons. It may interact directly with the ribosome. The stimulation of RF-1 and RF-2 is significantly reduced by GTP and GDP, but not by GMP. The chain is Peptide chain release factor 3 from Teredinibacter turnerae (strain ATCC 39867 / T7901).